The following is a 781-amino-acid chain: Catenin beta-1 (781 aa).

Alanine 2 is subject to N-acetylalanine. The interval 2–23 (ATQADLMELDMAMEPDRKAAVS) is interaction with VCL. Serine 23 is modified (phosphoserine; by GSK3-beta; alternate). O-linked (GlcNAc) serine; alternate glycosylation occurs at serine 23. At serine 29 the chain carries Phosphoserine; by GSK3-beta. Phosphoserine; by GSK3-beta and HIPK2 is present on residues serine 33 and serine 37. The interval 34–57 (GIHSGATTTAPSLSGKGNPEEEDV) is disordered. Threonine 41 bears the Phosphothreonine; by GSK3-beta mark. Serine 45 carries the post-translational modification Phosphoserine. The residue at position 49 (lysine 49) is an N6-acetyllysine. Tyrosine 64 is modified (phosphotyrosine; by PTK6). Tyrosine 142 is modified (phosphotyrosine; by FYN and PTK6). ARM repeat units follow at residues 151-191 (RAIP…IMRS), 193-234 (QMVS…IFKS), 235-276 (GGIP…VRLA), 277-318 (GGLQ…ILAS), 319-360 (GGPQ…IVEA), 361-389 (GGMQ…RNLS), 400-441 (GLLG…VCQV), 442-484 (GGIE…AQNA), 489-530 (YGLP…LREQ), 531-571 (GAIP…EIVE), 594-636 (NTIP…AEGA), and 637-666 (TAPL…SEDK). Positions 156–178 (LTKLLNDEDQVVVNKAAVMVHQL) are interaction with BCL9. Serine 191 bears the Phosphoserine mark. At serine 246 the chain carries Phosphoserine; by CDK5. Residues tyrosine 331 and tyrosine 333 each carry the phosphotyrosine modification. Serine 552 carries the phosphoserine modification. At threonine 556 the chain carries Phosphothreonine. Cysteine 619 carries the post-translational modification S-nitrosocysteine. The residue at position 675 (serine 675) is a Phosphoserine. The interval 720-781 (HSGGYGQDAL…NQLAWFDTDL (62 aa)) is disordered. A compositionally biased stretch (basic and acidic residues) spans 734–745 (MMEHEMGGHHPG). The segment at 772-781 (NQLAWFDTDL) is interaction with SCRIB.

Belongs to the beta-catenin family. Two separate complex-associated pools are found in the cytoplasm. The majority is present as component of an E-cadherin/ catenin adhesion complex composed of at least E-cadherin/CDH1 and beta-catenin/CTNNB1, and possibly alpha-catenin/CTNNA1; the complex is located to adherens junctions. The stable association of CTNNA1 is controversial as CTNNA1 was shown not to bind to F-actin when assembled in the complex. Alternatively, the CTNNA1-containing complex may be linked to F-actin by other proteins such as LIMA1. Another cytoplasmic pool is part of a large complex containing AXIN1, AXIN2, APC, CSNK1A1 and GSK3B that promotes phosphorylation on N-terminal Ser and Thr residues and ubiquitination of CTNNB1. Interacts directly with AXIN1; the interaction is regulated by CK2 via BTRC and its subsequent degradation by the proteasome. Interacts directly with AXIN1; the interaction is regulated by CDK2 phosphorylation. Wnt-dependent activation of DVL antagonizes the action of GSK3B. When GSK3B activity is inhibited the complex dissociates, CTNNB1 is dephosphorylated and is no longer targeted for destruction. The stabilized protein translocates to the nucleus, where it binds TCF/LEF-1 family members, BCL9, BCL9L and possibly also RUVBL1 and CHD8. Binds CTNNBIP and EP300. CTNNB1 forms a ternary complex with LEF1 and EP300 that is disrupted by CTNNBIP1 binding. Interacts with TAX1BP3 (via the PDZ domain); this interaction inhibits the transcriptional activity of CTNNB1. Interacts with AJAP1, BAIAP1, CARM1, CTNNA3, CXADR and PCDH11Y. Binds NHERF1. Interacts with GLIS2. Interacts with XIRP1. Interacts with PTPRU (via the cytoplasmic juxtamembrane domain) and with SLC30A9. Interacts with EMD. Interacts with SCRIB. Interacts with TNIK and TCF7L2. Interacts with SESTD1 and TRPC4. Interacts directly with AXIN1; the interaction is regulated by CDK2 phosphorylation of AXIN1. Interacts with CAV1. Interacts with TRPV4. The TRPV4 and CTNNB1 complex can interact with CDH1. Interacts with VCL. Interacts with PTPRJ. Interacts with PKT7. Interacts with NANOS1. Interacts with CDK2, NDRG2, NEK2 and CDK5. Found in a complex composed of MACF1, APC, AXIN1, CTNNB1 and GSK3B. Interacts with PTK6. Interacts with SOX7; this interaction may lead to proteasomal degradation of active CTNNB1 and thus inhibition of Wnt/beta-catenin-stimulated transcription. Identified in a complex with HINT1 and MITF. Interacts with FHIT. The CTNNB1 and TCF4 complex interacts with PML. Interacts with FERMT2. Identified in a complex with TCF4 and FERMT2. Interacts with RAPGEF2. Interacts with FAT1 (via the cytoplasmic domain). Interacts with RORA. May interact with P-cadherin/CDH3. Interacts with RNF220. Interacts with CTNND2. Interacts (via the C-terminal region) with CBY1. The complex composed, at least, of APC, CTNNB1 and GSK3B interacts with JPT1; the interaction requires the inactive form of GSK3B (phosphorylated at 'Ser-9'). Interacts with DLG5. Interacts with FAM53B; promoting translocation to the nucleus. Interacts with TMEM170B. Interacts with AHI1. Interacts with GID8. Component of an cadherin:catenin adhesion complex composed of at least of CDH26, beta-catenin/CTNNB1, alpha-catenin/CTNNA1 and p120 catenin/CTNND1. Forms a complex comprising APPL1, RUVBL2, APPL2, HDAC1 and HDAC2. Interacts with IRF2BPL; mediates the ubiquitination and degradation of CTNNB1. Interacts with AMFR. Interacts with LMBR1L. Interacts with SOX30; prevents interaction of CTNNB1 with TCF7L2/TCF4 and leads to inhibition of Wnt signaling. Interacts with SOX9; inhibiting CTNNB1 activity by competing with the binding sites of TCF/LEF within CTNNB1, thereby inhibiting the Wnt signaling. Interacts with SPN/CD43 cytoplasmic tail. Interacts (when phosphorylated at Tyr-333) with isoform M2 of PKM (PKM2); promoting transcription activation. Interacts with PKP2 (via HEAD domain). Interacts with CDH1. Interacts (when unphosphorylated) with FLYWCH1, perhaps preventing interaction of CTNNB1 with TCF4, and thereby regulating transcription activation; phosphorylation of CTNNB1 may inhibit the interaction. Interacts (via the central armadillo domains) with probable transcriptional regulator ADNP (via N-terminal region); interaction is direct and stabilizes CTNNB1 by modulating its phosphorylation by glycogen synthase kinase-3 beta GSK3B. Interacts with NR5A2. Interacts with DSG2; the interaction promotes localization of CTNNB1 at cell junctions thus reducing its nuclear localization and subsequent transcription of CTNNB1/TCF-target genes. In terms of processing, phosphorylation by GSK3B requires prior phosphorylation of Ser-45 by another kinase. Phosphorylation proceeds then from Thr-41 to Ser-33. Phosphorylated by NEK2. EGF stimulates tyrosine phosphorylation. Phosphorylated on Ser-33 and Ser-37 by HIPK2. This phosphorylation triggers proteasomal degradation. Phosphorylation at Ser-552 by AMPK promotes stabilization of the protein, enhancing TCF/LEF-mediated transcription. Phosphorylation on Ser-191 and Ser-246 by CDK5. Phosphorylation by CDK2 regulates insulin internalization. Phosphorylation by PTK6 at Tyr-64, Tyr-142, Tyr-331 and/or Tyr-333 with the predominant site at Tyr-64 is not essential for inhibition of transcriptional activity. Phosphorylation by SRC at Tyr-333 promotes interaction with isoform M2 of PKM (PKM2); promoting transcription activation. Ubiquitinated by the SCF(BTRC) E3 ligase complex when phosphorylated by GSK3B, leading to its degradation. Ubiquitinated by a E3 ubiquitin ligase complex containing UBE2D1, SIAH1, CACYBP/SIP, SKP1, APC and TBL1X, leading to its subsequent proteasomal degradation. Ubiquitinated and degraded following interaction with SOX9. Ubiquitinated via 'Lys-11'- and 'Lys-29'-linked ubiquitin chains by UBR5, leading to its stabilization. Post-translationally, S-nitrosylation at Cys-619 within adherens junctions promotes VEGF-induced, NO-dependent endothelial cell permeability by disrupting interaction with E-cadherin, thus mediating disassembly adherens junctions. In terms of processing, O-glycosylation at Ser-23 decreases nuclear localization and transcriptional activity, and increases localization to the plasma membrane and interaction with E-cadherin CDH1. Deacetylated at Lys-49 by SIRT1. As to expression, expressed in the testis.

The protein localises to the cytoplasm. Its subcellular location is the nucleus. The protein resides in the cytoskeleton. It localises to the cell junction. It is found in the adherens junction. The protein localises to the cell membrane. Its subcellular location is the microtubule organizing center. The protein resides in the centrosome. It localises to the spindle pole. It is found in the synapse. The protein localises to the cilium basal body. Its function is as follows. Key downstream component of the canonical Wnt signaling pathway. In the absence of Wnt, forms a complex with AXIN1, AXIN2, APC, CSNK1A1 and GSK3B that promotes phosphorylation on N-terminal Ser and Thr residues and ubiquitination of CTNNB1 via BTRC and its subsequent degradation by the proteasome. In the presence of Wnt ligand, CTNNB1 is not ubiquitinated and accumulates in the nucleus, where it acts as a coactivator for transcription factors of the TCF/LEF family, leading to activate Wnt responsive genes. Also acts as a coactivator for other transcription factors, such as NR5A2. Promotes epithelial to mesenchymal transition/mesenchymal to epithelial transition (EMT/MET) via driving transcription of CTNNB1/TCF-target genes. Involved in the regulation of cell adhesion, as component of an E-cadherin:catenin adhesion complex. Acts as a negative regulator of centrosome cohesion. Involved in the CDK2/PTPN6/CTNNB1/CEACAM1 pathway of insulin internalization. Blocks anoikis of malignant kidney and intestinal epithelial cells and promotes their anchorage-independent growth by down-regulating DAPK2. Disrupts PML function and PML-NB formation by inhibiting RANBP2-mediated sumoylation of PML. Promotes neurogenesis by maintaining sympathetic neuroblasts within the cell cycle. Involved in chondrocyte differentiation via interaction with SOX9: SOX9-binding competes with the binding sites of TCF/LEF within CTNNB1, thereby inhibiting the Wnt signaling. Acts as a positive regulator of odontoblast differentiation during mesenchymal tooth germ formation, via promoting the transcription of differentiation factors such as LEF1, BMP2 and BMP4. Activity is repressed in a MSX1-mediated manner at the bell stage of mesenchymal tooth germ formation which prevents premature differentiation of odontoblasts. This chain is Catenin beta-1, found in Rattus norvegicus (Rat).